A 398-amino-acid polypeptide reads, in one-letter code: cAMP-dependent protein kinase type 3 (398 aa).

2 positions are modified to phosphoserine: S15 and S55. In terms of domain architecture, Protein kinase spans 88–342; the sequence is FQILRTLGTG…SEDVKNHPWF (255 aa). Residues 94 to 102 and K117 each bind ATP; that span reads LGTGSFGRV. The active-site Proton acceptor is D211. The AGC-kinase C-terminal domain occupies 343 to 398; that stretch reads NEVIWEKLLARYIETPYEPPIQQGQGDTSQFDRYPEEEFNYGIQGEDPYMDLMKEF.

It belongs to the protein kinase superfamily. AGC Ser/Thr protein kinase family. cAMP subfamily.

The enzyme catalyses L-seryl-[protein] + ATP = O-phospho-L-seryl-[protein] + ADP + H(+). It carries out the reaction L-threonyl-[protein] + ATP = O-phospho-L-threonyl-[protein] + ADP + H(+). With respect to regulation, activated by cAMP. In Saccharomyces cerevisiae (strain ATCC 204508 / S288c) (Baker's yeast), this protein is cAMP-dependent protein kinase type 3 (TPK3).